The chain runs to 662 residues: Glutathione hydrolase 7 (662 aa).

Residues 1-106 (MAAENEASQE…AAECSCRQDG (106 aa)) are Cytoplasmic-facing. S17, S72, S79, and S83 each carry phosphoserine. A disordered region spans residues 26-90 (SFPRLPEDEP…DGSPLRETRK (65 aa)). The segment covering 72–83 (SSSSEMGSQDGS) has biased composition (low complexity). The helical; Signal-anchor for type II membrane protein transmembrane segment at 107–127 (LTVIVTACLTFATGVTVALVM) threads the bilayer. The Extracellular segment spans residues 128–662 (QIYFGDPQIF…SPDAAGATIL (535 aa)). 10 N-linked (GlcNAc...) asparagine glycosylation sites follow: N198, N267, N283, N330, N353, N394, N452, N519, N523, and N586.

It belongs to the gamma-glutamyltransferase family. In terms of assembly, interacts with TLCD3A. Heterodimer composed of the light and heavy chains. The active site is located in the light chain. Cleaved by autocatalysis into a large and a small subunit and the autocatalytic cleavage is essential to the functional activation of the enzyme. As to expression, widely expressed, but at low level, except in the airway epithelial cells. Detected in brain, heart, kidney, liver, lung, spleen, testis and trachea.

The protein resides in the membrane. It catalyses the reaction an N-terminal (5-L-glutamyl)-[peptide] + an alpha-amino acid = 5-L-glutamyl amino acid + an N-terminal L-alpha-aminoacyl-[peptide]. The catalysed reaction is glutathione + H2O = L-cysteinylglycine + L-glutamate. It carries out the reaction an S-substituted glutathione + H2O = an S-substituted L-cysteinylglycine + L-glutamate. Its pathway is sulfur metabolism; glutathione metabolism. Hydrolyzes and transfers gamma-glutamyl moieties from glutathione and other gamma-glutamyl compounds to acceptors. This is Glutathione hydrolase 7 from Homo sapiens (Human).